We begin with the raw amino-acid sequence, 472 residues long: Uronate isomerase (472 aa).

The protein belongs to the metallo-dependent hydrolases superfamily. Uronate isomerase family.

It catalyses the reaction D-glucuronate = D-fructuronate. It carries out the reaction aldehydo-D-galacturonate = keto-D-tagaturonate. It functions in the pathway carbohydrate metabolism; pentose and glucuronate interconversion. In Xanthomonas euvesicatoria pv. vesicatoria (strain 85-10) (Xanthomonas campestris pv. vesicatoria), this protein is Uronate isomerase.